The sequence spans 172 residues: 3-phenylpropionate/cinnamic acid dioxygenase subunit beta (172 aa).

It belongs to the bacterial ring-hydroxylating dioxygenase beta subunit family. As to quaternary structure, this dioxygenase system consists of four proteins: the two subunits of the hydroxylase component (HcaE and HcaF), a ferredoxin (HcaC) and a ferredoxin reductase (HcaD).

It carries out the reaction 3-phenylpropanoate + NADH + O2 + H(+) = 3-(cis-5,6-dihydroxycyclohexa-1,3-dien-1-yl)propanoate + NAD(+). It catalyses the reaction (E)-cinnamate + NADH + O2 + H(+) = (2E)-3-(cis-5,6-dihydroxycyclohexa-1,3-dien-1-yl)prop-2-enoate + NAD(+). It functions in the pathway aromatic compound metabolism; 3-phenylpropanoate degradation. Its function is as follows. Part of the multicomponent 3-phenylpropionate dioxygenase. Converts 3-phenylpropionic acid (PP) and cinnamic acid (CI) into 3-phenylpropionate-dihydrodiol (PP-dihydrodiol) and cinnamic acid-dihydrodiol (CI-dihydrodiol), respectively. The sequence is that of 3-phenylpropionate/cinnamic acid dioxygenase subunit beta from Escherichia coli O7:K1 (strain IAI39 / ExPEC).